The sequence spans 308 residues: uncharacterized protein (308 aa).

Polar residues-rich tracts occupy residues 138-148 (WSFTKHGSNTP) and 205-229 (STSH…QPPS). 2 disordered regions span residues 138–157 (WSFT…PLCN) and 205–235 (STSH…TDAS).

The protein resides in the cytoplasm. This is an uncharacterized protein from Schizosaccharomyces pombe (strain 972 / ATCC 24843) (Fission yeast).